The primary structure comprises 454 residues: Bifunctional protein GlmU (454 aa).

Residues Met1–Arg231 are pyrophosphorylase. Residues Leu11–Gly14, Lys25, Gln78, Gly83–Thr84, Tyr106–Asp108, Gly143, Glu157, Asn172, and Asn229 each bind UDP-N-acetyl-alpha-D-glucosamine. Asp108 is a Mg(2+) binding site. Mg(2+) is bound at residue Asn229. Residues Ala232–Asp252 are linker. The N-acetyltransferase stretch occupies residues Gly253–Asn454. Residues Arg318 and Lys336 each contribute to the UDP-N-acetyl-alpha-D-glucosamine site. His348 (proton acceptor) is an active-site residue. Residues Tyr351 and Asn362 each contribute to the UDP-N-acetyl-alpha-D-glucosamine site. Acetyl-CoA contacts are provided by residues Ala365, Asn371–Tyr372, Ser390, Ser408, and Arg425.

The protein in the N-terminal section; belongs to the N-acetylglucosamine-1-phosphate uridyltransferase family. In the C-terminal section; belongs to the transferase hexapeptide repeat family. Homotrimer. Mg(2+) serves as cofactor.

It is found in the cytoplasm. The enzyme catalyses alpha-D-glucosamine 1-phosphate + acetyl-CoA = N-acetyl-alpha-D-glucosamine 1-phosphate + CoA + H(+). It carries out the reaction N-acetyl-alpha-D-glucosamine 1-phosphate + UTP + H(+) = UDP-N-acetyl-alpha-D-glucosamine + diphosphate. Its pathway is nucleotide-sugar biosynthesis; UDP-N-acetyl-alpha-D-glucosamine biosynthesis; N-acetyl-alpha-D-glucosamine 1-phosphate from alpha-D-glucosamine 6-phosphate (route II): step 2/2. It functions in the pathway nucleotide-sugar biosynthesis; UDP-N-acetyl-alpha-D-glucosamine biosynthesis; UDP-N-acetyl-alpha-D-glucosamine from N-acetyl-alpha-D-glucosamine 1-phosphate: step 1/1. The protein operates within bacterial outer membrane biogenesis; LPS lipid A biosynthesis. In terms of biological role, catalyzes the last two sequential reactions in the de novo biosynthetic pathway for UDP-N-acetylglucosamine (UDP-GlcNAc). The C-terminal domain catalyzes the transfer of acetyl group from acetyl coenzyme A to glucosamine-1-phosphate (GlcN-1-P) to produce N-acetylglucosamine-1-phosphate (GlcNAc-1-P), which is converted into UDP-GlcNAc by the transfer of uridine 5-monophosphate (from uridine 5-triphosphate), a reaction catalyzed by the N-terminal domain. This Cereibacter sphaeroides (strain ATCC 17025 / ATH 2.4.3) (Rhodobacter sphaeroides) protein is Bifunctional protein GlmU.